The sequence spans 327 residues: GMP reductase (327 aa).

The Thioimidate intermediate role is filled by C175. Residue 204 to 227 (IIADGGIRTHGDVAKSIRFGATMV) coordinates NADP(+).

It belongs to the IMPDH/GMPR family. GuaC type 2 subfamily.

The enzyme catalyses IMP + NH4(+) + NADP(+) = GMP + NADPH + 2 H(+). In terms of biological role, catalyzes the irreversible NADPH-dependent deamination of GMP to IMP. It functions in the conversion of nucleobase, nucleoside and nucleotide derivatives of G to A nucleotides, and in maintaining the intracellular balance of A and G nucleotides. This chain is GMP reductase, found in Bacillus thuringiensis subsp. konkukian (strain 97-27).